We begin with the raw amino-acid sequence, 1284 residues long: DNA topoisomerase 2, mitochondrial (1284 aa).

The N-terminal 35 residues, 1–35 (MSKLLNNNNHKNLTNYLKFGKGIINNLNNKSKQVG), are a transit peptide targeting the mitochondrion. Residues N183, N212, 240–242 (GSN), and 253–260 (GRNGFGAK) each bind ATP. The segment at 445 to 447 (KKK) is interaction with DNA. 478 to 480 (QSK) lines the ATP pocket. One can recognise a Toprim domain in the interval 560–677 (CTLIITEGDS…NLLKRGFLVE (118 aa)). E566, D646, and D648 together coordinate Mg(2+). The Topo IIA-type catalytic domain maps to 810 to 1232 (IPSLIDGLKP…DPKSLWTADL (423 aa)). The O-(5'-phospho-DNA)-tyrosine intermediate role is filled by Y900. Residues 1245–1284 (EFQKKPLKTSSSSSFDVSSSSESAKLSSTRKSKTDKIKSK) are disordered. Residues 1254-1271 (SSSSSFDVSSSSESAKLS) show a composition bias toward low complexity.

It belongs to the type II topoisomerase family. In terms of assembly, homodimer. The cofactor is Mg(2+). It depends on Mn(2+) as a cofactor. Ca(2+) serves as cofactor.

The protein localises to the mitochondrion. It carries out the reaction ATP-dependent breakage, passage and rejoining of double-stranded DNA.. Its function is as follows. Control of topological states of DNA by transient breakage and subsequent rejoining of DNA strands. Topoisomerase II makes double-strand breaks. This Dictyostelium discoideum (Social amoeba) protein is DNA topoisomerase 2, mitochondrial (top2mt).